The primary structure comprises 38 residues: Toxin BmK NSPK (38 aa).

3 disulfide bridges follow: cysteine 7/cysteine 27, cysteine 13/cysteine 32, and cysteine 17/cysteine 34.

As to expression, expressed by the venom gland.

It localises to the secreted. Its function is as follows. Blocks voltage-gated potassium (Kv) channel and augments neurite extension via NGF/TrkA signaling pathway. The sequence is that of Toxin BmK NSPK from Olivierus martensii (Manchurian scorpion).